The following is a 454-amino-acid chain: Bifunctional protein GlmU (454 aa).

Positions Met-1–Arg-231 are pyrophosphorylase. UDP-N-acetyl-alpha-D-glucosamine contacts are provided by residues Leu-11–Gly-14, Lys-25, Gln-78, Gly-83–Thr-84, Tyr-106–Asp-108, Gly-143, Glu-157, Asn-172, and Asn-229. Asp-108 is a binding site for Mg(2+). Asn-229 serves as a coordination point for Mg(2+). Positions Ala-232 to Asp-252 are linker. Residues Gly-253–Asn-454 are N-acetyltransferase. UDP-N-acetyl-alpha-D-glucosamine contacts are provided by Arg-318 and Lys-336. The Proton acceptor role is filled by His-348. UDP-N-acetyl-alpha-D-glucosamine is bound by residues Tyr-351 and Asn-362. Acetyl-CoA-binding positions include Ala-365, Asn-371 to Tyr-372, Ser-390, Ser-408, and Arg-425.

This sequence in the N-terminal section; belongs to the N-acetylglucosamine-1-phosphate uridyltransferase family. The protein in the C-terminal section; belongs to the transferase hexapeptide repeat family. In terms of assembly, homotrimer. It depends on Mg(2+) as a cofactor.

The protein localises to the cytoplasm. It catalyses the reaction alpha-D-glucosamine 1-phosphate + acetyl-CoA = N-acetyl-alpha-D-glucosamine 1-phosphate + CoA + H(+). The enzyme catalyses N-acetyl-alpha-D-glucosamine 1-phosphate + UTP + H(+) = UDP-N-acetyl-alpha-D-glucosamine + diphosphate. It participates in nucleotide-sugar biosynthesis; UDP-N-acetyl-alpha-D-glucosamine biosynthesis; N-acetyl-alpha-D-glucosamine 1-phosphate from alpha-D-glucosamine 6-phosphate (route II): step 2/2. It functions in the pathway nucleotide-sugar biosynthesis; UDP-N-acetyl-alpha-D-glucosamine biosynthesis; UDP-N-acetyl-alpha-D-glucosamine from N-acetyl-alpha-D-glucosamine 1-phosphate: step 1/1. The protein operates within bacterial outer membrane biogenesis; LPS lipid A biosynthesis. Its function is as follows. Catalyzes the last two sequential reactions in the de novo biosynthetic pathway for UDP-N-acetylglucosamine (UDP-GlcNAc). The C-terminal domain catalyzes the transfer of acetyl group from acetyl coenzyme A to glucosamine-1-phosphate (GlcN-1-P) to produce N-acetylglucosamine-1-phosphate (GlcNAc-1-P), which is converted into UDP-GlcNAc by the transfer of uridine 5-monophosphate (from uridine 5-triphosphate), a reaction catalyzed by the N-terminal domain. In Cereibacter sphaeroides (strain ATCC 17025 / ATH 2.4.3) (Rhodobacter sphaeroides), this protein is Bifunctional protein GlmU.